A 110-amino-acid chain; its full sequence is Glycine cleavage system H-like protein (110 aa).

Positions 10–97 (VEKVGDLYVF…PEENWLFKLD (88 aa)) constitute a Lipoyl-binding domain. Asp27 carries the post-translational modification ADP-ribosyl aspartic acid. Residue Lys56 is modified to N6-lipoyllysine.

Lipoylated GcvH-L directly interacts with SAV0325, which reverses the SirTM-mediated mono-ADP-ribosylation of GcvH-L, and with the oxidoreductase SAV0322. Is lipoylated on K-56 by LplA2 (SAV0327) and then mono-ADP-ribosylated, probably on D-27, by SirTM (SAV0326). The mono-ADP-ribosylation state of GcvH-L might regulate the availability of the lipoyl moiety for redox reactions; ADP-ribosylation would inhibit the interaction of the oxidoreductase with GcvH-L when it is not required, thus ADP-ribosylation of GcvH-L might be acting to keep the response 'off' under non-stress conditions.

In terms of biological role, may act as a carrier protein for the ROS scavenging lipoyl moiety and/or as a substrate for oxidoreductases such as SAV0322 and SAV0323. The protein is Glycine cleavage system H-like protein of Staphylococcus aureus (strain Mu50 / ATCC 700699).